A 283-amino-acid chain; its full sequence is Thymidylate synthase (283 aa).

DUMP is bound at residue R22. C160 acts as the Nucleophile in catalysis. DUMP is bound by residues 180–183, N191, and 221–223; these read RSCD and HIY. A (6R)-5,10-methylene-5,6,7,8-tetrahydrofolate-binding site is contributed by D183. S282 is a binding site for (6R)-5,10-methylene-5,6,7,8-tetrahydrofolate.

Belongs to the thymidylate synthase family. Bacterial-type ThyA subfamily. In terms of assembly, homodimer.

Its subcellular location is the cytoplasm. The catalysed reaction is dUMP + (6R)-5,10-methylene-5,6,7,8-tetrahydrofolate = 7,8-dihydrofolate + dTMP. Its pathway is pyrimidine metabolism; dTTP biosynthesis. Catalyzes the reductive methylation of 2'-deoxyuridine-5'-monophosphate (dUMP) to 2'-deoxythymidine-5'-monophosphate (dTMP) while utilizing 5,10-methylenetetrahydrofolate (mTHF) as the methyl donor and reductant in the reaction, yielding dihydrofolate (DHF) as a by-product. This enzymatic reaction provides an intracellular de novo source of dTMP, an essential precursor for DNA biosynthesis. The polypeptide is Thymidylate synthase (Pasteurella multocida (strain Pm70)).